Consider the following 622-residue polypeptide: Apical membrane antigen 1 (622 aa).

Residues 1–24 form the signal peptide; the sequence is MRKLYCVLLLSAFEFTYMINFGRG. Residues 25-546 lie on the Extracellular side of the membrane; that stretch reads QNYWEHPYQN…EHKPTYDNMK (522 aa). 5 disulfides stabilise this stretch: cysteine 149/cysteine 302, cysteine 217/cysteine 247, cysteine 263/cysteine 275, cysteine 320/cysteine 418, and cysteine 337/cysteine 409. N-linked (GlcNAc...) asparagine glycosylation occurs at asparagine 162. 5 N-linked (GlcNAc...) asparagine glycosylation sites follow: asparagine 286, asparagine 371, asparagine 421, asparagine 422, and asparagine 499. Disulfide bonds link cysteine 443/cysteine 502, cysteine 490/cysteine 507, and cysteine 492/cysteine 509. Residues 547–567 traverse the membrane as a helical segment; it reads IIIASSAAVAVLATILMVYLY. Residues 568-622 lie on the Cytoplasmic side of the membrane; that stretch reads KRKGNAEKYDKMDQPQDYGKSTSRNDEMLDPEASFWGEEKRASHTTPVLMEKPYY. The disordered stretch occupies residues 577–607; it reads DKMDQPQDYGKSTSRNDEMLDPEASFWGEEK.

The protein belongs to the apicomplexan parasites AMA1 family.

The protein localises to the membrane. In terms of biological role, involved in parasite invasion of erythrocytes. The chain is Apical membrane antigen 1 (AMA-1) from Plasmodium falciparum (isolate Camp / Malaysia).